The chain runs to 349 residues: Cbb3-type cytochrome c oxidase subunit CcoP (349 aa).

Residues 1–67 (MADTDDEHAS…RVVRDRKGGR (67 aa)) are disordered. Over 1-96 (MADTDDEHAS…NPLPRWWLWT (96 aa)) the chain is Cytoplasmic. Positions 16–30 (NRIELERQAADEAHK) are enriched in basic and acidic residues. A helical transmembrane segment spans residues 97–117 (FYATIVWGVLYLIAYPAIPLV). Residues 118 to 349 (NGATQGLLGQ…AYVHSLGGGE (232 aa)) are Periplasmic-facing. Cytochrome c domains lie at 168–258 (YTAN…LELG) and 265–346 (ALAA…HSLG). Positions 181, 184, 185, 233, 278, 281, 282, and 323 each coordinate heme c.

Belongs to the CcoP / FixP family. Component of the cbb3-type cytochrome c oxidase at least composed of CcoN, CcoO, CcoQ and CcoP. Heme c is required as a cofactor.

The protein resides in the cell inner membrane. It functions in the pathway energy metabolism; oxidative phosphorylation. Its function is as follows. C-type cytochrome. Part of the cbb3-type cytochrome c oxidase complex. CcoP subunit is required for transferring electrons from donor cytochrome c via its heme groups to CcoO subunit. From there, electrons are shuttled to the catalytic binuclear center of CcoN subunit where oxygen reduction takes place. The complex also functions as a proton pump. This Paracoccus denitrificans (strain Pd 1222) protein is Cbb3-type cytochrome c oxidase subunit CcoP.